Consider the following 448-residue polypeptide: Serine--tRNA ligase (448 aa).

Residue 246-248 (TAE) coordinates L-serine. Residues 277 to 279 (RKE) and V293 contribute to the ATP site. Residue E300 participates in L-serine binding. 364–367 (ELAS) provides a ligand contact to ATP. T399 is a binding site for L-serine.

Belongs to the class-II aminoacyl-tRNA synthetase family. Type-1 seryl-tRNA synthetase subfamily. In terms of assembly, homodimer. The tRNA molecule binds across the dimer.

The protein localises to the cytoplasm. The catalysed reaction is tRNA(Ser) + L-serine + ATP = L-seryl-tRNA(Ser) + AMP + diphosphate + H(+). The enzyme catalyses tRNA(Sec) + L-serine + ATP = L-seryl-tRNA(Sec) + AMP + diphosphate + H(+). It functions in the pathway aminoacyl-tRNA biosynthesis; selenocysteinyl-tRNA(Sec) biosynthesis; L-seryl-tRNA(Sec) from L-serine and tRNA(Sec): step 1/1. Functionally, catalyzes the attachment of serine to tRNA(Ser). Is also able to aminoacylate tRNA(Sec) with serine, to form the misacylated tRNA L-seryl-tRNA(Sec), which will be further converted into selenocysteinyl-tRNA(Sec). The chain is Serine--tRNA ligase from Pyrobaculum islandicum (strain DSM 4184 / JCM 9189 / GEO3).